Reading from the N-terminus, the 385-residue chain is tRNA-specific 2-thiouridylase MnmA (385 aa).

ATP contacts are provided by residues Gly-30–Ser-37 and Met-56. The interaction with target base in tRNA stretch occupies residues Asn-118–Asp-120. The active-site Nucleophile is Cys-123. A disulfide bridge links Cys-123 with Cys-220. Gly-148 contacts ATP. Residues Lys-170–Gln-172 form an interaction with tRNA region. Cys-220 functions as the Cysteine persulfide intermediate in the catalytic mechanism. The interaction with tRNA stretch occupies residues Arg-332 to Tyr-333.

This sequence belongs to the MnmA/TRMU family.

The protein localises to the cytoplasm. The enzyme catalyses S-sulfanyl-L-cysteinyl-[protein] + uridine(34) in tRNA + AH2 + ATP = 2-thiouridine(34) in tRNA + L-cysteinyl-[protein] + A + AMP + diphosphate + H(+). In terms of biological role, catalyzes the 2-thiolation of uridine at the wobble position (U34) of tRNA, leading to the formation of s(2)U34. This is tRNA-specific 2-thiouridylase MnmA from Haemophilus influenzae (strain PittGG).